Consider the following 83-residue polypeptide: Putative membrane protein insertion efficiency factor (83 aa).

The protein belongs to the UPF0161 family.

It localises to the cell inner membrane. In terms of biological role, could be involved in insertion of integral membrane proteins into the membrane. This Pelagibacter ubique (strain HTCC1062) protein is Putative membrane protein insertion efficiency factor.